Reading from the N-terminus, the 182-residue chain is MSRIGKMPIKVPPGIKVDINGNDVTVKGPKGTLSRSFRPEVTINREGDYLVVAPVGTDKATRSFFGLSRTLLDNMIVGVKDGFDKNLEIVGVGMRADKDGDKVVFKVGFSHSVTVAPPAGITLSVDGTTKVKVSGINKEDVGQMAAEIRSIRKPDHYMGKGIRYAGEYVRIKPGKAIGKGAK.

It belongs to the universal ribosomal protein uL6 family. Part of the 50S ribosomal subunit.

In terms of biological role, this protein binds to the 23S rRNA, and is important in its secondary structure. It is located near the subunit interface in the base of the L7/L12 stalk, and near the tRNA binding site of the peptidyltransferase center. In Dehalococcoides mccartyi (strain CBDB1), this protein is Large ribosomal subunit protein uL6.